A 130-amino-acid chain; its full sequence is Lysozyme C, kidney isozyme (130 aa).

The C-type lysozyme domain maps to 1 to 130 (KVFERCELAR…LTSYIQGCGV (130 aa)). 4 cysteine pairs are disulfide-bonded: C6–C128, C30–C116, C65–C81, and C77–C95. Residues E35 and D53 contribute to the active site.

This sequence belongs to the glycosyl hydrolase 22 family. As to quaternary structure, monomer.

Its subcellular location is the secreted. It catalyses the reaction Hydrolysis of (1-&gt;4)-beta-linkages between N-acetylmuramic acid and N-acetyl-D-glucosamine residues in a peptidoglycan and between N-acetyl-D-glucosamine residues in chitodextrins.. Functionally, lysozymes have primarily a bacteriolytic function; those in tissues and body fluids are associated with the monocyte-macrophage system and enhance the activity of immunoagents. In Ovis aries (Sheep), this protein is Lysozyme C, kidney isozyme.